We begin with the raw amino-acid sequence, 31 residues long: Cytochrome b6-f complex subunit 8 (31 aa).

The helical transmembrane segment at 5–25 (IVSLAWAALMVVFTFSLSLVV) threads the bilayer.

Belongs to the PetN family. The 4 large subunits of the cytochrome b6-f complex are cytochrome b6, subunit IV (17 kDa polypeptide, PetD), cytochrome f and the Rieske protein, while the 4 small subunits are PetG, PetL, PetM and PetN. The complex functions as a dimer.

It localises to the plastid. It is found in the chloroplast thylakoid membrane. Its function is as follows. Component of the cytochrome b6-f complex, which mediates electron transfer between photosystem II (PSII) and photosystem I (PSI), cyclic electron flow around PSI, and state transitions. This chain is Cytochrome b6-f complex subunit 8, found in Acorus calamus (Sweet flag).